Consider the following 194-residue polypeptide: dTTP/UTP pyrophosphatase (194 aa).

The Proton acceptor role is filled by D73.

The protein belongs to the Maf family. YhdE subfamily. The cofactor is a divalent metal cation.

The protein resides in the cytoplasm. The catalysed reaction is dTTP + H2O = dTMP + diphosphate + H(+). The enzyme catalyses UTP + H2O = UMP + diphosphate + H(+). In terms of biological role, nucleoside triphosphate pyrophosphatase that hydrolyzes dTTP and UTP. May have a dual role in cell division arrest and in preventing the incorporation of modified nucleotides into cellular nucleic acids. This is dTTP/UTP pyrophosphatase from Geotalea uraniireducens (strain Rf4) (Geobacter uraniireducens).